The following is a 217-amino-acid chain: Small ribosomal subunit protein uS3 (217 aa).

The region spanning 40–110 (IRDLINKWFN…EVYINIHEVR (71 aa)) is the KH type-2 domain.

This sequence belongs to the universal ribosomal protein uS3 family. In terms of assembly, part of the 30S ribosomal subunit. Forms a tight complex with proteins S10 and S14.

Binds the lower part of the 30S subunit head. Binds mRNA in the 70S ribosome, positioning it for translation. This Rickettsia typhi (strain ATCC VR-144 / Wilmington) protein is Small ribosomal subunit protein uS3.